Here is a 231-residue protein sequence, read N- to C-terminus: Acyl-protein thioesterase 2 (231 aa).

Residue cysteine 2 is the site of S-palmitoyl cysteine attachment. At serine 82 the chain carries Phosphoserine. Active-site charge relay system residues include serine 122, aspartate 176, and histidine 210.

Belongs to the AB hydrolase superfamily. AB hydrolase 2 family.

It is found in the cytoplasm. The catalysed reaction is S-hexadecanoyl-L-cysteinyl-[protein] + H2O = L-cysteinyl-[protein] + hexadecanoate + H(+). It carries out the reaction prostaglandin E2 1-glyceryl ester + H2O = prostaglandin E2 + glycerol + H(+). It catalyses the reaction 1-hexadecanoyl-sn-glycero-3-phosphocholine + H2O = sn-glycerol 3-phosphocholine + hexadecanoate + H(+). The enzyme catalyses 1-octadecanoyl-sn-glycero-3-phosphocholine + H2O = octadecanoate + sn-glycerol 3-phosphocholine + H(+). The catalysed reaction is 1-hexadecanoyl-sn-glycero-3-phosphate + H2O = sn-glycerol 3-phosphate + hexadecanoate + H(+). It carries out the reaction 1-hexadecanoyl-sn-glycero-3-phospho-L-serine + H2O = sn-glycero-3-phospho-L-serine + hexadecanoate + H(+). Acts as an acyl-protein thioesterase hydrolyzing fatty acids from S-acylated cysteine residues in proteins such as trimeric G alpha proteins, GSDMD, GAP43, ZDHHC6 or HRAS. Deacylates GAP43. Mediates depalmitoylation of ZDHHC6. Has lysophospholipase activity. Hydrolyzes prostaglandin glycerol esters (PG-Gs) in the following order prostaglandin D2-glycerol ester (PGD2-G) &gt; prostaglandin E2 glycerol ester (PGE2-G) &gt; prostaglandin F2-alpha-glycerol ester (PGF2-alpha-G). Hydrolyzes 1-arachidonoylglycerol but not 2-arachidonoylglycerol or arachidonoylethanolamide. This chain is Acyl-protein thioesterase 2 (Lypla2), found in Rattus norvegicus (Rat).